The sequence spans 624 residues: Exocyst complex component EXO70B1 (624 aa).

Residues 148 to 176 form a disordered region; it reads FGLNPQGDAGAMNHRFDSEEEEDDDRDFN.

It belongs to the EXO70 family. In terms of assembly, interacts with EXO70B2, SEC5A and EXO84B. Binds to PUB18. Binds directly to B1L at the plasma membrane and in small vesicles. In terms of processing, target of the E3 ubiquitin-protein ligase PUB18 that mediates its ubiquitination and degradation via the 26S proteasome.

It localises to the cytoplasmic vesicle. The protein localises to the phagosome. The protein resides in the endomembrane system. Its subcellular location is the cell membrane. It is found in the vesicle. Its function is as follows. Component of an exocyst subcomplex specifically involved in autophagy-related, Golgi-independent membrane traffic to the vacuole. Regulates autophagosome formation and autophagy-related Golgi-independent import into the vacuole. Positive regulator of both abscisic acid (ABA)-promoted and mannitol (drought)-promoted stomatal closure. Involved in the regulation of lateral root formation. The sequence is that of Exocyst complex component EXO70B1 from Arabidopsis thaliana (Mouse-ear cress).